We begin with the raw amino-acid sequence, 101 residues long: CRISPR-associated endoribonuclease Cas2 (101 aa).

Asp8 provides a ligand contact to Mg(2+).

The protein belongs to the CRISPR-associated endoribonuclease Cas2 protein family. Homodimer, forms a heterotetramer with a Cas1 homodimer. The cofactor is Mg(2+).

Its function is as follows. CRISPR (clustered regularly interspaced short palindromic repeat), is an adaptive immune system that provides protection against mobile genetic elements (viruses, transposable elements and conjugative plasmids). CRISPR clusters contain sequences complementary to antecedent mobile elements and target invading nucleic acids. CRISPR clusters are transcribed and processed into CRISPR RNA (crRNA). Functions as a ssRNA-specific endoribonuclease. Involved in the integration of spacer DNA into the CRISPR cassette. The polypeptide is CRISPR-associated endoribonuclease Cas2 (Treponema denticola (strain ATCC 35405 / DSM 14222 / CIP 103919 / JCM 8153 / KCTC 15104)).